Consider the following 462-residue polypeptide: Sugar transporter ERD6-like 12 (462 aa).

A run of 12 helical transmembrane segments spans residues 25–45 (LLIF…AAIG), 62–82 (LAQF…GAIF), 101–121 (LFCI…WLDM), 124–144 (FLVG…IAEI), 151–171 (GAFT…VYYF), 179–199 (TLAI…FFIP), 262–282 (LTIG…GISS), 297–317 (IGMM…LILV), 326–346 (LMTS…AFGV), 358–378 (IFCF…MGAL), 399–419 (VTIA…FMLV), and 424–444 (GTFI…WCLV).

This sequence belongs to the major facilitator superfamily. Sugar transporter (TC 2.A.1.1) family.

It is found in the membrane. Its function is as follows. Sugar transporter. The polypeptide is Sugar transporter ERD6-like 12 (SUGTL5) (Arabidopsis thaliana (Mouse-ear cress)).